The sequence spans 210 residues: Protein-methionine-sulfoxide reductase heme-binding subunit MsrQ (210 aa).

6 helical membrane passes run 8 to 28 (LAVF…AWIF), 37 to 57 (VLVE…LSMT), 75 to 95 (LGLW…LFIL), 110 to 130 (PYII…VTSN), 147 to 167 (IIYV…RADL), and 169 to 189 (EWAL…PVFA).

Belongs to the MsrQ family. Heterodimer of a catalytic subunit (MsrP) and a heme-binding subunit (MsrQ). FMN is required as a cofactor. It depends on heme b as a cofactor.

It localises to the cell inner membrane. Functionally, part of the MsrPQ system that repairs oxidized periplasmic proteins containing methionine sulfoxide residues (Met-O), using respiratory chain electrons. Thus protects these proteins from oxidative-stress damage caused by reactive species of oxygen and chlorine generated by the host defense mechanisms. MsrPQ is essential for the maintenance of envelope integrity under bleach stress, rescuing a wide series of structurally unrelated periplasmic proteins from methionine oxidation. MsrQ provides electrons for reduction to the reductase catalytic subunit MsrP, using the quinone pool of the respiratory chain. The protein is Protein-methionine-sulfoxide reductase heme-binding subunit MsrQ of Pseudomonas syringae pv. syringae (strain B728a).